Here is a 208-residue protein sequence, read N- to C-terminus: GATA transcription factor 29 (208 aa).

The segment at 155–208 (GMKKCTNMNCNALNTPMWRRGPLGPKSLCNACGIKFRKEEERKAKRNVVIVLDD) adopts a GATA-type; atypical zinc-finger fold.

This sequence belongs to the type IV zinc-finger family. Class B subfamily.

The protein resides in the nucleus. In terms of biological role, transcriptional regulator that specifically binds 5'-GATA-3' or 5'-GAT-3' motifs within gene promoters. The polypeptide is GATA transcription factor 29 (GATA29) (Arabidopsis thaliana (Mouse-ear cress)).